The chain runs to 158 residues: Protein Smg homolog (158 aa).

Belongs to the Smg family.

This is Protein Smg homolog from Thioalkalivibrio sulfidiphilus (strain HL-EbGR7).